Here is a 322-residue protein sequence, read N- to C-terminus: Ribose-phosphate pyrophosphokinase 1 (322 aa).

Residues 39 to 41 (DGE) and 98 to 99 (RQ) contribute to the ATP site. 2 residues coordinate Mg(2+): His-132 and Asp-173. Lys-196 is a catalytic residue. Residues Arg-198, Asp-224, and 228 to 232 (DTAGT) each bind D-ribose 5-phosphate.

The protein belongs to the ribose-phosphate pyrophosphokinase family. Class I subfamily. Homohexamer. Requires Mg(2+) as cofactor.

It is found in the cytoplasm. It catalyses the reaction D-ribose 5-phosphate + ATP = 5-phospho-alpha-D-ribose 1-diphosphate + AMP + H(+). Its pathway is metabolic intermediate biosynthesis; 5-phospho-alpha-D-ribose 1-diphosphate biosynthesis; 5-phospho-alpha-D-ribose 1-diphosphate from D-ribose 5-phosphate (route I): step 1/1. In terms of biological role, involved in the biosynthesis of the central metabolite phospho-alpha-D-ribosyl-1-pyrophosphate (PRPP) via the transfer of pyrophosphoryl group from ATP to 1-hydroxyl of ribose-5-phosphate (Rib-5-P). In Streptococcus agalactiae serotype III (strain NEM316), this protein is Ribose-phosphate pyrophosphokinase 1.